A 145-amino-acid polypeptide reads, in one-letter code: MKQQKDASKPAHFFHQVIVIALVLFVSKIIESFMPIPMPGSVIGLVLLFVLLCTGAVKLGEVEKVGTTLTNNIGLLFVPAGISVVNSLGVISQAPFLIIGLIIVSTILLLICTGYVTQIIMKVTSRSKGDKVTKKIKIEEAQAHD.

A run of 4 helical transmembrane segments spans residues 13–30 (FFHQ…SKII), 40–62 (GSVI…LGEV), 69–91 (LTNN…LGVI), and 95–117 (PFLI…GYVT).

Belongs to the CidA/LrgA family. LrgA subfamily.

It localises to the cell membrane. Inhibits the expression or activity of extracellular murein hydrolases by interacting, possibly with LrgB, with the holin-like proteins CidA and/or CidB. The LrgAB and CidAB proteins may affect the proton motive force of the membrane. May be involved in programmed cell death (PCD), possibly triggering PCD in response to antibiotics and environmental stresses. The protein is Antiholin-like protein LrgA of Staphylococcus aureus (strain MW2).